The primary structure comprises 311 residues: Putative dihydroorotate dehydrogenase A (fumarate) (311 aa).

Substrate-binding positions include lysine 45, 69–73, and asparagine 128; that span reads NSMGL. 45 to 46 provides a ligand contact to FMN; sequence KT. Asparagine 128 is an FMN binding site. Residue cysteine 131 is the Nucleophile of the active site. The FMN site is built by lysine 165 and valine 193. Residue 194–195 participates in substrate binding; sequence NS. Residues glycine 220, 248–249, and 270–271 contribute to the FMN site; these read GG and GT.

It belongs to the dihydroorotate dehydrogenase family. Type 1 subfamily. In terms of assembly, homodimer. Requires FMN as cofactor.

The protein resides in the cytoplasm. It catalyses the reaction (S)-dihydroorotate + fumarate = orotate + succinate. The protein operates within pyrimidine metabolism; UMP biosynthesis via de novo pathway. Catalyzes the conversion of dihydroorotate to orotate with fumarate as the electron acceptor. This Streptococcus pyogenes serotype M1 protein is Putative dihydroorotate dehydrogenase A (fumarate) (pyrD).